The primary structure comprises 255 residues: ETS-related transcription factor Elf-5 (255 aa).

One can recognise a PNT domain in the interval 33–119 (YPAFEHQTAC…FILQSIRSQG (87 aa)). The ETS DNA-binding region spans 163 to 244 (SHLWEFVRDL…VDRRLVYKFG (82 aa)).

Belongs to the ETS family.

It is found in the nucleus. Functionally, transcriptionally activator that may play a role in regulating the later stages of keratinocytes terminal differentiation. Binds to DNA sequences containing the consensus nucleotide core sequence GGA[AT]. This Bos taurus (Bovine) protein is ETS-related transcription factor Elf-5 (ELF5).